Here is a 218-residue protein sequence, read N- to C-terminus: Hypoxanthine-guanine phosphoribosyltransferase (218 aa).

The residue at position 2 (A2) is an N-acetylalanine. K69 lines the GMP pocket. N6-acetyllysine is present on K103. A Glycyl lysine isopeptide (Lys-Gly) (interchain with G-Cter in SUMO1); alternate cross-link involves residue K115. Residue K115 forms a Glycyl lysine isopeptide (Lys-Gly) (interchain with G-Cter in SUMO2); alternate linkage. GMP-binding positions include 134-142, K166, 186-188, and D194; these read EDIIDTGKT and KFV. The active-site Proton acceptor is D138. At T142 the chain carries Phosphothreonine. Mg(2+) is bound at residue D194.

This sequence belongs to the purine/pyrimidine phosphoribosyltransferase family. Homotetramer. Mg(2+) is required as a cofactor.

The protein localises to the cytoplasm. It catalyses the reaction IMP + diphosphate = hypoxanthine + 5-phospho-alpha-D-ribose 1-diphosphate. The catalysed reaction is GMP + diphosphate = guanine + 5-phospho-alpha-D-ribose 1-diphosphate. Its pathway is purine metabolism; IMP biosynthesis via salvage pathway; IMP from hypoxanthine: step 1/1. In terms of biological role, converts guanine to guanosine monophosphate, and hypoxanthine to inosine monophosphate. Transfers the 5-phosphoribosyl group from 5-phosphoribosylpyrophosphate onto the purine. Plays a central role in the generation of purine nucleotides through the purine salvage pathway. This chain is Hypoxanthine-guanine phosphoribosyltransferase (HPRT1), found in Pan troglodytes (Chimpanzee).